A 492-amino-acid polypeptide reads, in one-letter code: Sestrin-1 (492 aa).

Residues Phe-71–Ser-252 form an N-terminal domain; may mediate the alkylhydroperoxide reductase activity region. The active-site Cysteine sulfenic acid (-SOH) intermediate is Cys-130. 2 positions are modified to phosphoserine: Ser-293 and Ser-314. Residues Pro-321–Thr-492 are C-terminal domain; mediates TORC1 regulation. Residues Thr-386 to Thr-389, Thr-398, and Glu-463 contribute to the L-leucine site.

This sequence belongs to the sestrin family. In terms of assembly, interacts with the GATOR2 complex which is composed of MIOS, SEC13, SEH1L, WDR24 and WDR59; the interaction is negatively regulated by leucine. Interacts with RRAGA, RRAGB, RRAGC and RRAGD; may function as a guanine nucleotide dissociation inhibitor for RRAGs and regulate them. Interacts with KEAP1, RBX1 and SQSTM1; in the SQSTM1-dependent autophagic degradation of KEAP1. May interact with PRDX1.

Its subcellular location is the nucleus. It is found in the cytoplasm. It carries out the reaction a hydroperoxide + L-cysteinyl-[protein] = S-hydroxy-L-cysteinyl-[protein] + an alcohol. Its function is as follows. Functions as an intracellular leucine sensor that negatively regulates the TORC1 signaling pathway through the GATOR complex. In absence of leucine, binds the GATOR subcomplex GATOR2 and prevents TORC1 signaling. Binding of leucine to SESN2 disrupts its interaction with GATOR2 thereby activating the TORC1 signaling pathway. This stress-inducible metabolic regulator may also play a role in protection against oxidative and genotoxic stresses. May positively regulate the transcription by NFE2L2 of genes involved in the response to oxidative stress by facilitating the SQSTM1-mediated autophagic degradation of KEAP1. Moreover, may prevent the accumulation of reactive oxygen species (ROS) through the alkylhydroperoxide reductase activity born by the N-terminal domain of the protein. Was originally reported to contribute to oxidative stress resistance by reducing PRDX1. However, this could not be confirmed. In Macaca fascicularis (Crab-eating macaque), this protein is Sestrin-1.